A 469-amino-acid chain; its full sequence is Trigger factor (469 aa).

In terms of domain architecture, PPIase FKBP-type spans 165-250; that stretch reads GDRVTIDYIG…VKAVCKSDEL (86 aa). A compositionally biased stretch (basic and acidic residues) spans 444 to 460; the sequence is DLTEKKPLKKKTAEKVS. A disordered region spans residues 444 to 469; the sequence is DLTEKKPLKKKTAEKVSTKKKAPKKS.

This sequence belongs to the FKBP-type PPIase family. Tig subfamily.

It localises to the cytoplasm. The enzyme catalyses [protein]-peptidylproline (omega=180) = [protein]-peptidylproline (omega=0). In terms of biological role, involved in protein export. Acts as a chaperone by maintaining the newly synthesized protein in an open conformation. Functions as a peptidyl-prolyl cis-trans isomerase. This Bartonella henselae (strain ATCC 49882 / DSM 28221 / CCUG 30454 / Houston 1) (Rochalimaea henselae) protein is Trigger factor.